The sequence spans 111 residues: Large ribosomal subunit protein uL22 (111 aa).

It belongs to the universal ribosomal protein uL22 family. Part of the 50S ribosomal subunit.

In terms of biological role, this protein binds specifically to 23S rRNA; its binding is stimulated by other ribosomal proteins, e.g. L4, L17, and L20. It is important during the early stages of 50S assembly. It makes multiple contacts with different domains of the 23S rRNA in the assembled 50S subunit and ribosome. Its function is as follows. The globular domain of the protein is located near the polypeptide exit tunnel on the outside of the subunit, while an extended beta-hairpin is found that lines the wall of the exit tunnel in the center of the 70S ribosome. The sequence is that of Large ribosomal subunit protein uL22 from Xylella fastidiosa (strain M23).